The following is a 276-amino-acid chain: Putative pyruvate, phosphate dikinase regulatory protein 1 (276 aa).

Position 150-157 (150-157 (GLPRTSKT)) interacts with ADP.

The protein belongs to the pyruvate, phosphate/water dikinase regulatory protein family. PDRP subfamily.

The enzyme catalyses N(tele)-phospho-L-histidyl/L-threonyl-[pyruvate, phosphate dikinase] + ADP = N(tele)-phospho-L-histidyl/O-phospho-L-threonyl-[pyruvate, phosphate dikinase] + AMP + H(+). The catalysed reaction is N(tele)-phospho-L-histidyl/O-phospho-L-threonyl-[pyruvate, phosphate dikinase] + phosphate + H(+) = N(tele)-phospho-L-histidyl/L-threonyl-[pyruvate, phosphate dikinase] + diphosphate. In terms of biological role, bifunctional serine/threonine kinase and phosphorylase involved in the regulation of the pyruvate, phosphate dikinase (PPDK) by catalyzing its phosphorylation/dephosphorylation. This Syntrophomonas wolfei subsp. wolfei (strain DSM 2245B / Goettingen) protein is Putative pyruvate, phosphate dikinase regulatory protein 1.